The sequence spans 466 residues: Rho GTPase-activating protein 1 (466 aa).

2 disordered regions span residues 1–31 and 65–84; these read MTEVLHFPSSPSASHSSSSSSSSPSPSSLSY and EEQDLRRRSSTDGGEEDDGG. Over residues 8 to 31 the composition is skewed to low complexity; that stretch reads PSSPSASHSSSSSSSSPSPSSLSY. The segment covering 65-74 has biased composition (basic and acidic residues); the sequence is EEQDLRRRSS. In terms of domain architecture, CRIB spans 117–130; that stretch reads IGWPTNVRHVAHVT. A Rho-GAP domain is found at 162–342; that stretch reads VSTESMQLSY…TLIEKTLRER (181 aa). Residues 354–402 are disordered; sequence PLEPSDESGHQSPSQSLAFNTSEQSEETQSDNIENAENQSSSSEISDEL. Polar residues-rich tracts occupy residues 363 to 376 and 383 to 397; these read HQSPSQSLAFNTSE and SDNIENAENQSSSSE.

Its function is as follows. Acts as a GTPase activator for the Rac-type GTPase by converting it to an inactive GDP-bound state. The chain is Rho GTPase-activating protein 1 (ROPGAP1) from Arabidopsis thaliana (Mouse-ear cress).